The chain runs to 109 residues: UPF0122 protein BH2485 (109 aa).

This sequence belongs to the UPF0122 family.

Its function is as follows. Might take part in the signal recognition particle (SRP) pathway. This is inferred from the conservation of its genetic proximity to ftsY/ffh. May be a regulatory protein. The protein is UPF0122 protein BH2485 of Halalkalibacterium halodurans (strain ATCC BAA-125 / DSM 18197 / FERM 7344 / JCM 9153 / C-125) (Bacillus halodurans).